The chain runs to 143 residues: Large ribosomal subunit protein uL11 (143 aa).

This sequence belongs to the universal ribosomal protein uL11 family. As to quaternary structure, part of the ribosomal stalk of the 50S ribosomal subunit. Interacts with L10 and the large rRNA to form the base of the stalk. L10 forms an elongated spine to which L12 dimers bind in a sequential fashion forming a multimeric L10(L12)X complex. One or more lysine residues are methylated.

Its function is as follows. Forms part of the ribosomal stalk which helps the ribosome interact with GTP-bound translation factors. The chain is Large ribosomal subunit protein uL11 from Herminiimonas arsenicoxydans.